The sequence spans 317 residues: (2S)-3-sulfopropanediol dehydratase activating enzyme (317 aa).

Positions 18 to 306 constitute a Radical SAM core domain; sequence HDGPGLRTEL…QMLAEYFNQR (289 aa). Cysteine 32, cysteine 36, cysteine 39, cysteine 58, cysteine 64, cysteine 67, cysteine 71, cysteine 92, cysteine 95, cysteine 98, and cysteine 102 together coordinate [4Fe-4S] cluster. 38 to 40 is an S-adenosyl-L-methionine binding site; it reads WCS. 2 consecutive 4Fe-4S ferredoxin-type domains span residues 49–82 and 83–112; these read AQVG…FTRG and KLTS…LWGK. Residues glycine 142 and 191–193 contribute to the S-adenosyl-L-methionine site; that span reads DIK.

It belongs to the organic radical-activating enzymes family. [4Fe-4S] cluster is required as a cofactor.

The enzyme catalyses glycyl-[protein] + reduced [flavodoxin] + S-adenosyl-L-methionine = glycin-2-yl radical-[protein] + semiquinone [flavodoxin] + 5'-deoxyadenosine + L-methionine + H(+). It functions in the pathway organosulfur degradation; alkanesulfonate degradation. Its function is as follows. Involved in the degradation of the organosulfur compound 2(S)-dihydroxypropanesulfonate (DHPS). Catalyzes activation of the (2S)-3-sulfopropanediol dehydratase HpfG under anaerobic conditions by generation of an organic free radical on a glycine residue. This Klebsiella oxytoca protein is (2S)-3-sulfopropanediol dehydratase activating enzyme.